Here is a 90-residue protein sequence, read N- to C-terminus: Probable Fe(2+)-trafficking protein (90 aa).

It belongs to the Fe(2+)-trafficking protein family.

In terms of biological role, could be a mediator in iron transactions between iron acquisition and iron-requiring processes, such as synthesis and/or repair of Fe-S clusters in biosynthetic enzymes. The chain is Probable Fe(2+)-trafficking protein from Cupriavidus pinatubonensis (strain JMP 134 / LMG 1197) (Cupriavidus necator (strain JMP 134)).